Here is an 88-residue protein sequence, read N- to C-terminus: Small ribosomal subunit protein uS15c (88 aa).

The protein belongs to the universal ribosomal protein uS15 family. Part of the 30S ribosomal subunit.

The protein resides in the plastid. The protein localises to the chloroplast. The sequence is that of Small ribosomal subunit protein uS15c (rps15) from Arabidopsis thaliana (Mouse-ear cress).